The following is a 289-amino-acid chain: ATP synthase gamma chain (289 aa).

Belongs to the ATPase gamma chain family. In terms of assembly, F-type ATPases have 2 components, CF(1) - the catalytic core - and CF(0) - the membrane proton channel. CF(1) has five subunits: alpha(3), beta(3), gamma(1), delta(1), epsilon(1). CF(0) has three main subunits: a, b and c.

The protein resides in the cell inner membrane. Produces ATP from ADP in the presence of a proton gradient across the membrane. The gamma chain is believed to be important in regulating ATPase activity and the flow of protons through the CF(0) complex. This is ATP synthase gamma chain from Aromatoleum aromaticum (strain DSM 19018 / LMG 30748 / EbN1) (Azoarcus sp. (strain EbN1)).